The primary structure comprises 1464 residues: Nuclear pore complex protein NUP155 (1464 aa).

Ser-2 is modified (N-acetylserine).

This sequence belongs to the non-repetitive/WGA-negative nucleoporin family. Part of the nuclear pore complex (NPC). The NPC has an eight-fold symmetrical structure comprising a central transport channel and two rings, the cytoplasmic and nuclear rings, to which eight filaments are attached. The cytoplasmic filaments have loose ends, while the nuclear filaments are joined in a distal ring, forming a nuclear basket. NPCs are highly dynamic in configuration and composition, and can be devided in 3 subcomplexes, the NUP62 subcomplex, the NUP107-160 subcomplex and the NUP93 subcomplex, containing approximately 30 different nucleoporin proteins.

The protein localises to the nucleus. Its subcellular location is the nuclear pore complex. In terms of biological role, major component of the nuclear pore complex (NPC). This Arabidopsis thaliana (Mouse-ear cress) protein is Nuclear pore complex protein NUP155.